The following is a 228-amino-acid chain: MKFAVIVFPGSNCDVDMYHAIADELGEEVEYVWHDEENLDRFDAILLPGGFSYGDYLRSGAIARFSKVMAAVKQAAEAGKPVLGVCNGFQILLEAGLLPGAMRRNQGLKFICRPVQLVVENNETMFTSAYGKDEVITIPIAHGEGNYYCDEQTLNRLVENRQIVFRYHGENPNGSLADIAGIVNERGNVLGMMPHPERAVDALLGSADGLKLFRSIVNYWRETHVVTA.

The region spanning 3–226 (FAVIVFPGSN…VNYWRETHVV (224 aa)) is the Glutamine amidotransferase type-1 domain. The active-site Nucleophile is the C86. Active-site residues include H195 and E197.

Part of the FGAM synthase complex composed of 1 PurL, 1 PurQ and 2 PurS subunits.

Its subcellular location is the cytoplasm. It catalyses the reaction N(2)-formyl-N(1)-(5-phospho-beta-D-ribosyl)glycinamide + L-glutamine + ATP + H2O = 2-formamido-N(1)-(5-O-phospho-beta-D-ribosyl)acetamidine + L-glutamate + ADP + phosphate + H(+). The catalysed reaction is L-glutamine + H2O = L-glutamate + NH4(+). It functions in the pathway purine metabolism; IMP biosynthesis via de novo pathway; 5-amino-1-(5-phospho-D-ribosyl)imidazole from N(2)-formyl-N(1)-(5-phospho-D-ribosyl)glycinamide: step 1/2. In terms of biological role, part of the phosphoribosylformylglycinamidine synthase complex involved in the purines biosynthetic pathway. Catalyzes the ATP-dependent conversion of formylglycinamide ribonucleotide (FGAR) and glutamine to yield formylglycinamidine ribonucleotide (FGAM) and glutamate. The FGAM synthase complex is composed of three subunits. PurQ produces an ammonia molecule by converting glutamine to glutamate. PurL transfers the ammonia molecule to FGAR to form FGAM in an ATP-dependent manner. PurS interacts with PurQ and PurL and is thought to assist in the transfer of the ammonia molecule from PurQ to PurL. This Geobacillus thermodenitrificans (strain NG80-2) protein is Phosphoribosylformylglycinamidine synthase subunit PurQ.